The chain runs to 259 residues: Probable metal transport system ATP-binding protein CPn_0348/CP_0412/CPj0348/CpB0355 (259 aa).

Positions 3–241 (VKDETFWSVH…TIFQTYGCEI (239 aa)) constitute an ABC transporter domain. Residue 41-48 (GPNGAGKS) coordinates ATP.

It belongs to the ABC transporter superfamily.

Its subcellular location is the cell inner membrane. In terms of biological role, part of an ATP-driven transport system CPn0346/CPn0347/CPn0348/CPn0349 for a metal. Probably responsible for energy coupling to the transport system. The protein is Probable metal transport system ATP-binding protein CPn_0348/CP_0412/CPj0348/CpB0355 of Chlamydia pneumoniae (Chlamydophila pneumoniae).